The primary structure comprises 452 residues: Phosphatidylinositol N-acetylglucosaminyltransferase GPI3 subunit (452 aa).

A helical membrane pass occupies residues 407-427 (LYLLCGIVEYMLFFLLEWLYP).

It belongs to the glycosyltransferase group 1 family. As to quaternary structure, component of the phosphatidylinositol N-acetylglucosaminyltransferase complex composed of at least GPI1, GPI2, GPI3, GPI15, GPI19 and ERI1.

Its subcellular location is the endoplasmic reticulum membrane. It carries out the reaction a 1,2-diacyl-sn-glycero-3-phospho-(1D-myo-inositol) + UDP-N-acetyl-alpha-D-glucosamine = a 6-(N-acetyl-alpha-D-glucosaminyl)-1-(1,2-diacyl-sn-glycero-3-phospho)-1D-myo-inositol + UDP + H(+). The protein operates within glycolipid biosynthesis; glycosylphosphatidylinositol-anchor biosynthesis. Inhibited by Ras, probably via the interaction between RAS2 and ERI1. Its function is as follows. Catalytic subunit in the complex catalyzing the transfer of N-acetylglucosamine from UDP-N-acetylglucosamine to phosphatidylinositol, the first step of GPI biosynthesis. The polypeptide is Phosphatidylinositol N-acetylglucosaminyltransferase GPI3 subunit (SPT14) (Saccharomyces cerevisiae (strain YJM789) (Baker's yeast)).